The primary structure comprises 647 residues: Endogenous retrovirus group K member 8 Gag polyprotein (647 aa).

Gly-2 is lipidated: N-myristoyl glycine. The disordered stretch occupies residues 165–264 (GKGPELVGPS…APPSRQGSEL (100 aa)). Residues 232 to 247 (GMPPAPQGREPYPQPP) show a composition bias toward pro residues. 2 CCHC-type zinc fingers span residues 544-561 (GKCYNCGQIGHLKKNCPV) and 580-597 (DLCPRCKKGKHWASQCRS). The tract at residues 598-641 (KFDKNGQPLSGNEQRGQPQAPQQTGAFPIQPFVPQGFQDNNPHC) is disordered. Residues 604 to 622 (QPLSGNEQRGQPQAPQQTG) show a composition bias toward polar residues.

Belongs to the beta type-B retroviral Gag protein family. HERV class-II K(HML-2) gag subfamily. Post-translationally, myristoylation is essential for retroviral assembly. Alteration of the glycine residue leads to a block in the budding of particles and an accumulation of Gag inside the cell. In terms of processing, specific enzymatic cleavages may yield mature proteins.

It localises to the cell membrane. In terms of biological role, the products of the Gag polyproteins of infectious retroviruses perform highly complex orchestrated tasks during the assembly, budding, maturation, and infection stages of the viral replication cycle. During viral assembly, the proteins form membrane associations and self-associations that ultimately result in budding of an immature virion from the infected cell. Gag precursors also function during viral assembly to selectively bind and package two plus strands of genomic RNA. Endogenous Gag proteins may have kept, lost or modified their original function during evolution. The sequence is that of Endogenous retrovirus group K member 8 Gag polyprotein (ERVK-8) from Homo sapiens (Human).